The following is a 127-amino-acid chain: Large ribosomal subunit protein bL17 (127 aa).

It belongs to the bacterial ribosomal protein bL17 family. Part of the 50S ribosomal subunit. Contacts protein L32.

This Lactobacillus gasseri (strain ATCC 33323 / DSM 20243 / BCRC 14619 / CIP 102991 / JCM 1131 / KCTC 3163 / NCIMB 11718 / NCTC 13722 / AM63) protein is Large ribosomal subunit protein bL17.